A 293-amino-acid chain; its full sequence is Ribosomal protein L11 methyltransferase (293 aa).

S-adenosyl-L-methionine-binding residues include Thr145, Gly166, Asp188, and Asn229.

The protein belongs to the methyltransferase superfamily. PrmA family.

It is found in the cytoplasm. The enzyme catalyses L-lysyl-[protein] + 3 S-adenosyl-L-methionine = N(6),N(6),N(6)-trimethyl-L-lysyl-[protein] + 3 S-adenosyl-L-homocysteine + 3 H(+). Functionally, methylates ribosomal protein L11. The polypeptide is Ribosomal protein L11 methyltransferase (Halorhodospira halophila (strain DSM 244 / SL1) (Ectothiorhodospira halophila (strain DSM 244 / SL1))).